Consider the following 329-residue polypeptide: Probable cell division protein WhiA (329 aa).

Residues 275–308 (SLEELGALADPPLTKDAVAGRIRRLLAMADKRAQ) constitute a DNA-binding region (H-T-H motif).

This sequence belongs to the WhiA family.

In terms of biological role, involved in cell division and chromosome segregation. The polypeptide is Probable cell division protein WhiA (Streptomyces avermitilis (strain ATCC 31267 / DSM 46492 / JCM 5070 / NBRC 14893 / NCIMB 12804 / NRRL 8165 / MA-4680)).